Reading from the N-terminus, the 59-residue chain is UPF0434 protein SO_2800 (59 aa).

This sequence belongs to the UPF0434 family.

This Shewanella oneidensis (strain ATCC 700550 / JCM 31522 / CIP 106686 / LMG 19005 / NCIMB 14063 / MR-1) protein is UPF0434 protein SO_2800.